The primary structure comprises 1028 residues: Pentatricopeptide repeat-containing protein At3g09040, mitochondrial (1028 aa).

The N-terminal 30 residues, 1-30 (MYFRVLLTPSSAMFDSFSFVRRLSYSPDLG), are a transit peptide targeting the mitochondrion. PPR repeat units follow at residues 94–123 (EGRL…FLEK), 124–158 (DVTA…QIFP), 159–193 (NKFT…GLER), 194–224 (NSYC…IVDP), 225–259 (NTVC…GHRP), 260–290 (DHLA…MSSP), 291–325 (DVVA…SVKS), 326–360 (TRST…GLAS), 361–391 (NIYV…LEEK), 392–426 (NDVF…GYNI), 427–461 (DDFT…KLAK), 462–492 (NLFV…MCDR), 493–527 (DNVT…GIVS), 528–562 (DGAC…GLDR), 563–593 (DLHT…LPEW), 594–627 (SVVS…GVNP), 628–662 (SEIT…GFSS), 664–694 (GEYL…LSSP), 696–730 (SIVL…GVLP), 731–765 (DQAT…AHDL), 766–796 (DELT…MRRR), 798–832 (NVVS…HIMP), 833–863 (DEIT…MIGQ), and 869–899 (RVDH…QNLK). The interval 904–979 (LWSSLLGACR…VPGYSWIDVE (76 aa)) is type E motif. Residues 980-1010 (QRTHIFAAGDKSHSEIGKIEMFLEDLYDLMK) form a type E(+) motif region.

This sequence belongs to the PPR family. PCMP-E subfamily.

The protein localises to the mitochondrion. The chain is Pentatricopeptide repeat-containing protein At3g09040, mitochondrial (PCMP-E88) from Arabidopsis thaliana (Mouse-ear cress).